Reading from the N-terminus, the 527-residue chain is Probable glucomannan 4-beta-mannosyltransferase 9 (527 aa).

The chain crosses the membrane as a helical span at residues 37-59; the sequence is AMSVMLFVEKVYMSVVLVGVHLF. Asp-131 is an active-site residue. Residues Asp-190 and Asp-192 each contribute to the substrate site. Asp-284 is a catalytic residue. Transmembrane regions (helical) follow at residues 363–383, 399–419, 478–498, and 505–525; these read IIGH…TVLI, IVTI…IFWV, ALEL…IAYG, and FLFL…GTIV.

Belongs to the glycosyltransferase 2 family. Plant cellulose synthase-like A subfamily.

It localises to the golgi apparatus membrane. The enzyme catalyses GDP-mannose + (glucomannan)n = GDP + (glucomannan)n+1.. Its function is as follows. Probable mannan synthase which consists of a 4-beta-mannosyltransferase activity on mannan using GDP-mannose. The beta-1,4-mannan product is the backbone for galactomannan synthesis by galactomannan galactosyltransferase. Galactomannan is a noncellulosic polysaccharides of plant cell wall. The sequence is that of Probable glucomannan 4-beta-mannosyltransferase 9 from Oryza sativa subsp. japonica (Rice).